The sequence spans 149 residues: Histone H2B.3, sperm (149 aa).

Positions 1-57 are disordered; that stretch reads MPRSPAKTSPRKGSPRKGSPRKGSPSRKASPKRGGKGAKRAGKGGRRRRVVKRRRRR. Short sequence motifs (SPKK motif) lie at residues 4 to 7, 9 to 12, 14 to 17, 19 to 22, 24 to 27, and 30 to 33; these read SPAK, SPRK, SPSR, and SPKR. Basic residues predominate over residues 9–20; that stretch reads SPRKGSPRKGSP. A phosphoserine mark is found at S19, S24, and S30. Positions 29–57 are enriched in basic residues; the sequence is ASPKRGGKGAKRAGKGGRRRRVVKRRRRR. S136 is a glycosylation site (O-linked (GlcNAc) serine). K144 is covalently cross-linked (Glycyl lysine isopeptide (Lys-Gly) (interchain with G-Cter in ubiquitin)).

It belongs to the histone H2B family. The nucleosome is a histone octamer containing two molecules each of H2A, H2B, H3 and H4 assembled in one H3-H4 heterotetramer and two H2A-H2B heterodimers. The octamer wraps approximately 147 bp of DNA. Monoubiquitination of Lys-144 gives a specific tag for epigenetic transcriptional activation and is also prerequisite for histone H3 'Lys-4' and 'Lys-79' methylation. Post-translationally, phosphorylated on SPKK motifs 4, 5 and 6; which may regulate DNA binding. Dephosphorylated during maturation of spermatids to mature sperm and rephosphorylated at fertilization. In terms of processing, glcNAcylation at Ser-136 promotes monoubiquitination of Lys-144. It fluctuates in response to extracellular glucose, and associates with transcribed genes.

Its subcellular location is the nucleus. It is found in the chromosome. In terms of biological role, core component of nucleosome. Nucleosomes wrap and compact DNA into chromatin, limiting DNA accessibility to the cellular machineries which require DNA as a template. Histones thereby play a central role in transcription regulation, DNA repair, DNA replication and chromosomal stability. DNA accessibility is regulated via a complex set of post-translational modifications of histones, also called histone code, and nucleosome remodeling. The protein is Histone H2B.3, sperm of Parechinus angulosus (Angulate sea urchin).